We begin with the raw amino-acid sequence, 536 residues long: Lysosomal acid glucosylceramidase (536 aa).

The signal sequence occupies residues 1-39 (MEFSSPSREECPKPLSRVSIMAGSLTGLLLLQAVSWASG). Intrachain disulfides connect C43–C55 and C57–C62. 3 N-linked (GlcNAc...) asparagine glycosylation sites follow: N58, N98, and N185. The active-site Proton donor is E274. N309 carries N-linked (GlcNAc...) asparagine glycosylation. The active-site Nucleophile is the E379. N501 carries an N-linked (GlcNAc...) asparagine glycan.

It belongs to the glycosyl hydrolase 30 family. As to quaternary structure, interacts with saposin-C. Interacts with SCARB2. Interacts with TCP1. May interacts with SNCA; this interaction may inhibit the glucosylceramidase activity. Interacts with GRN; this interaction prevents aggregation of GBA1-SCARB2 complex via interaction with HSPA1A upon stress.

It is found in the lysosome membrane. It catalyses the reaction a beta-D-glucosyl-(1&lt;-&gt;1')-N-acylsphing-4-enine + H2O = an N-acylsphing-4-enine + D-glucose. The enzyme catalyses a beta-D-galactosyl-(1&lt;-&gt;1')-N-acylsphing-4-enine + H2O = an N-acylsphing-4-enine + D-galactose. The catalysed reaction is cholesteryl 3-beta-D-glucoside + H2O = cholesterol + D-glucose. It carries out the reaction a beta-D-glucosyl-(1&lt;-&gt;1')-N-acylsphing-4-enine + cholesterol = cholesteryl 3-beta-D-glucoside + an N-acylsphing-4-enine. It catalyses the reaction beta-D-glucosyl-N-(9Z-octadecenoyl)-sphing-4E-enine + cholesterol = N-(9Z-octadecenoyl)-sphing-4-enine + cholesteryl 3-beta-D-glucoside. The enzyme catalyses beta-D-glucosyl-(1&lt;-&gt;1')-N-hexadecanoylsphing-4-enine + cholesterol = cholesteryl 3-beta-D-glucoside + N-hexadecanoylsphing-4-enine. The catalysed reaction is beta-D-glucosyl-N-octanoylsphing-4E-enine + cholesterol = N-octanoylsphing-4-enine + cholesteryl 3-beta-D-glucoside. It carries out the reaction beta-D-glucosyl-N-dodecanoylsphing-4-enine + cholesterol = N-dodecanoylsphing-4-enine + cholesteryl 3-beta-D-glucoside. It catalyses the reaction beta-D-glucosyl-(1&lt;-&gt;1)-N-octadecanoylsphing-4-enine + cholesterol = N-octadecanoylsphing-4-enine + cholesteryl 3-beta-D-glucoside. The enzyme catalyses beta-D-glucosyl-(1&lt;-&gt;1')-N-(15Z-tetracosenoyl)-sphing-4-enine + cholesterol = N-(15Z-tetracosenoyl)-sphing-4-enine + cholesteryl 3-beta-D-glucoside. The catalysed reaction is a beta-D-galactosyl-(1&lt;-&gt;1')-N-acylsphing-4-enine + cholesterol = cholesteryl 3-beta-D-galactoside + an N-acylsphing-4-enine. It carries out the reaction 1-(beta-D-galactosyl)-N-dodecanoylsphing-4-enine + cholesterol = cholesteryl 3-beta-D-galactoside + N-dodecanoylsphing-4-enine. It catalyses the reaction a beta-D-xylosyl-(1&lt;-&gt;1')-N-acylsphing-4-enine + cholesterol = cholesteryl 3-beta-D-xyloside + an N-acylsphing-4-enine. The enzyme catalyses beta-D-xylosyl-(1&lt;-&gt;1')-N-(9Z-octadecenoyl)-sphing-4-enine + cholesterol = cholesteryl 3-beta-D-xyloside + N-(9Z-octadecenoyl)-sphing-4-enine. The protein operates within steroid metabolism; cholesterol metabolism. It functions in the pathway sphingolipid metabolism. Its activity is regulated as follows. Synergistically activated by saposin-A and saposin-C, two saposin peptides produced by proteolytic processing of prosaposin/PSAP. Saposin-C activates GBA1 through its recruitment to membranes. The membrane structure and composition in anionic phospholipids are also important for the activation. Activated by PKC in the salvage pathway of ceramide formation. Inhibited by conduritol B epoxide/CBE. Its function is as follows. Glucosylceramidase that catalyzes, within the lysosomal compartment, the hydrolysis of glucosylceramides/GlcCers (such as beta-D-glucosyl-(1&lt;-&gt;1')-N-acylsphing-4-enine) into free ceramides (such as N-acylsphing-4-enine) and glucose. Plays a central role in the degradation of complex lipids and the turnover of cellular membranes. Through the production of ceramides, participates in the PKC-activated salvage pathway of ceramide formation. Catalyzes the glucosylation of cholesterol, through a transglucosylation reaction where glucose is transferred from GlcCer to cholesterol. GlcCer containing mono-unsaturated fatty acids (such as beta-D-glucosyl-N-(9Z-octadecenoyl)-sphing-4-enine) are preferred as glucose donors for cholesterol glucosylation when compared with GlcCer containing same chain length of saturated fatty acids (such as beta-D-glucosyl-N-octadecanoyl-sphing-4-enine). Under specific conditions, may alternatively catalyze the reverse reaction, transferring glucose from cholesteryl 3-beta-D-glucoside to ceramide. Can also hydrolyze cholesteryl 3-beta-D-glucoside producing glucose and cholesterol. Catalyzes the hydrolysis of galactosylceramides/GalCers (such as beta-D-galactosyl-(1&lt;-&gt;1')-N-acylsphing-4-enine), as well as the transfer of galactose between GalCers and cholesterol in vitro, but with lower activity than with GlcCers. Contrary to GlcCer and GalCer, xylosylceramide/XylCer (such as beta-D-xyosyl-(1&lt;-&gt;1')-N-acylsphing-4-enine) is not a good substrate for hydrolysis, however it is a good xylose donor for transxylosylation activity to form cholesteryl 3-beta-D-xyloside. The sequence is that of Lysosomal acid glucosylceramidase from Homo sapiens (Human).